The primary structure comprises 128 residues: Small ribosomal subunit protein uS9 (128 aa).

This sequence belongs to the universal ribosomal protein uS9 family.

The chain is Small ribosomal subunit protein uS9 from Cytophaga hutchinsonii (strain ATCC 33406 / DSM 1761 / CIP 103989 / NBRC 15051 / NCIMB 9469 / D465).